The chain runs to 328 residues: GTPase Obg (328 aa).

In terms of domain architecture, Obg spans 2–160 (YNFKDSVSIT…LNVRLELFLV (159 aa)). The OBG-type G domain maps to 161-326 (ADIGLVGLPN…LIKEFFVLAK (166 aa)). Residues 167–174 (GLPNAGKS), 192–196 (FTTKI), 213–216 (DIPG), 280–283 (NKLD), and 307–309 (SIY) contribute to the GTP site. Residues serine 174 and threonine 194 each contribute to the Mg(2+) site.

Belongs to the TRAFAC class OBG-HflX-like GTPase superfamily. OBG GTPase family. In terms of assembly, monomer. Mg(2+) is required as a cofactor.

It is found in the cytoplasm. Functionally, an essential GTPase which binds GTP, GDP and possibly (p)ppGpp with moderate affinity, with high nucleotide exchange rates and a fairly low GTP hydrolysis rate. Plays a role in control of the cell cycle, stress response, ribosome biogenesis and in those bacteria that undergo differentiation, in morphogenesis control. The polypeptide is GTPase Obg (Borreliella afzelii (strain PKo) (Borrelia afzelii)).